We begin with the raw amino-acid sequence, 252 residues long: Triosephosphate isomerase (252 aa).

Asn-10 to Lys-12 serves as a coordination point for substrate. The Electrophile role is filled by His-96. The Proton acceptor role is filled by Glu-168. Substrate contacts are provided by residues Gly-174, Ser-214, and Gly-235 to Gly-236.

This sequence belongs to the triosephosphate isomerase family. Homodimer.

It is found in the cytoplasm. It carries out the reaction D-glyceraldehyde 3-phosphate = dihydroxyacetone phosphate. It functions in the pathway carbohydrate biosynthesis; gluconeogenesis. It participates in carbohydrate degradation; glycolysis; D-glyceraldehyde 3-phosphate from glycerone phosphate: step 1/1. Functionally, involved in the gluconeogenesis. Catalyzes stereospecifically the conversion of dihydroxyacetone phosphate (DHAP) to D-glyceraldehyde-3-phosphate (G3P). This Lactobacillus acidophilus (strain ATCC 700396 / NCK56 / N2 / NCFM) protein is Triosephosphate isomerase.